We begin with the raw amino-acid sequence, 382 residues long: Probable purine permease 4 (382 aa).

Helical transmembrane passes span 25-45 (LTLLIVTYFFLFFGSIASSLL), 62-82 (WVQSAGFPLLLILIYFPHYVL), 98-118 (LIFSVLIGLVLGFNNFLFSWG), 121-141 (YLPVSTSSLLLSTQLVFTLIL), 150-170 (ITFSNLNCVVLLTLSSVLLAL), 185-205 (YFIGYVSTIGAGLLFALYLPV), 224-244 (LVMEFAATVFATIGMACEGGF), 260-280 (TFYWTFAILANVVTWQLSFAA), 291-311 (ITGGICMTALLAMNVIGGVVA), and 315-335 (VFGGVKIVSTVLCIWGFSSYT). The region spanning 66–170 (AGFPLLLILI…LTLSSVLLAL (105 aa)) is the EamA domain. The interval 345 to 364 (EEKEKGEYSGVKTTEDSGEM) is disordered.

Belongs to the purine permeases (TC 2.A.7.14) family.

The protein localises to the membrane. The protein is Probable purine permease 4 (PUP4) of Arabidopsis thaliana (Mouse-ear cress).